Reading from the N-terminus, the 1127-residue chain is MAECGRGGAAGGALPTSPGPALGAKGALKAGVGEGGGGGGRLGHGRARYDSGGVSNGDCSLGVSGDEARASPTRGPRGVALAPTPSAVVCTLPRESKPGGLPRRSSIIKDGTKQKRERKKTVSFSSMPTEKKISSASDCINSMVEGSELKKVRSNSRIYHRYFLLDADMQSLRWEPSKKDSEKAKIDIKSIKEVRTGKNTDIFRSNGISDQISEDCAFSVIYGENYESLDLVANSADVANIWVTGLRYLISYGKHTLDMLESSQDNMRTSWVSQMFSEIDVDNLGHITLCNAVQCIRNLNPGLKTSKIELKFKELHKSKDKAGTEVTKEEFIEVFHELCTRPEIYFLLVQFSSNKEFLDTKDLMMFLEAEQGVAHINEEISLEIIHKYEPSKEGQEKGWLSIDGFTNYLMSPDCYIFDPEHKKVCQDMKQPLSHYFINSSHNTYLIEDQFRGPSDITGYIRALKMGCRSVELDVWDGPDNEPVIYTGHTMTSQIVFRSVIDIINKYAFFASEYPLILCLENHCSIKQQKVMVQHMKKLLGDKLYTTSPNVEESYLPSPDVLKGKILIKAKKLSSNCSGVEGDVTDEDEGAEMSQRMGKENMEQPNNVPVKRFQLCKELSELVSICKSVQFKEFQVSFQVQKYWEVCSFNEVLASKYANENPGDFVNYNKRFLARVFPSPMRIDSSNMNPQDFWKCGCQIVAMNFQTPGLMMDLNIGWFRQNGNCGYVLRPAIMREEVSFFSANTKDSVPGVSPQLLHIKIISGQNFPKPKGSGAKGDVVDPYVYVEIHGIPADCAEQRTKTVHQNGDAPIFDESFEFQINLPELAMVRFVVLDDDYIGDEFIGQYTIPFECLQTGYRHVPLQSLTGEVLAHASLFVHVAITNRRGGGKPHKRGLSVRKGKKSREYASLRTLWIKTVDEVFKNAQPPIRDATDLRENMQNAVVSFKELCGLSSVANLMQCMLAVSPRFLGPDNTPLVVLNLSEQYPTMELQGIVPEVLKKIVTTYDMMIQSLKALIENADAVYEKIVHCQKAAMEFHEHLHSIGTKEGLKERKLQKAVESFTWNITILKGQADLLKYAKNETLENLKQIHFAAVSCGLNKPGTENADVQKPRRSLEVIPEKANDETGE.

Positions 1 to 11 are enriched in gly residues; sequence MAECGRGGAAG. Residues 1–128 are disordered; the sequence is MAECGRGGAA…KKTVSFSSMP (128 aa). Ala2 bears the N-acetylalanine mark. Position 17 is a phosphoserine (Ser17). Residues 19-31 show a composition bias toward low complexity; sequence GPALGAKGALKAG. Positions 32 to 42 are enriched in gly residues; the sequence is VGEGGGGGGRL. A Phosphothreonine modification is found at Thr84. Positions 141 to 251 constitute a PH domain; the sequence is NSMVEGSELK…WVTGLRYLIS (111 aa). The region spanning 426-570 is the PI-PLC X-box domain; the sequence is QDMKQPLSHY…LKGKILIKAK (145 aa). Thr584 carries the post-translational modification Phosphothreonine. In terms of domain architecture, PI-PLC Y-box spans 618 to 734; the sequence is LSELVSICKS…GYVLRPAIMR (117 aa). The C2 domain maps to 734–863; sequence REEVSFFSAN…TGYRHVPLQS (130 aa). The segment at 1101–1127 is disordered; sequence GTENADVQKPRRSLEVIPEKANDETGE. Over residues 1106 to 1127 the composition is skewed to basic and acidic residues; the sequence is DVQKPRRSLEVIPEKANDETGE. Ser1113 carries the phosphoserine modification.

It localises to the cytoplasm. In terms of biological role, may play an role in the regulation of Ins(1,4,5)P3 around the endoplasmic reticulum. This Homo sapiens (Human) protein is Inactive phospholipase C-like protein 2 (PLCL2).